Here is a 177-residue protein sequence, read N- to C-terminus: Meiotic chromosome segregation protein C17A2.07c (177 aa).

Positions 71–90 (EDDSINKPTEEADEAPRTQL) are disordered. Positions 74–86 (SINKPTEEADEAP) are enriched in basic and acidic residues.

The protein localises to the nucleus. Its function is as follows. Involved in meiotic chromosome segregation. The polypeptide is Meiotic chromosome segregation protein C17A2.07c (Schizosaccharomyces pombe (strain 972 / ATCC 24843) (Fission yeast)).